Consider the following 186-residue polypeptide: GTP cyclohydrolase 1 (186 aa).

Residues cysteine 78, histidine 81, and cysteine 150 each coordinate Zn(2+).

It belongs to the GTP cyclohydrolase I family. In terms of assembly, toroid-shaped homodecamer, composed of two pentamers of five dimers.

The enzyme catalyses GTP + H2O = 7,8-dihydroneopterin 3'-triphosphate + formate + H(+). Its pathway is cofactor biosynthesis; 7,8-dihydroneopterin triphosphate biosynthesis; 7,8-dihydroneopterin triphosphate from GTP: step 1/1. This is GTP cyclohydrolase 1 from Enterococcus faecalis (strain ATCC 700802 / V583).